Consider the following 100-residue polypeptide: MNEEKAIKEFVNALKSKYRGRIKKIILFGSYARGDYTEESDIDILIVGDVDFDYVIDLCTKLLLKYGVVINAIVESEELFNKKINWSFHRNVLEEGRVLY.

The GSX(10)DXD motif motif lies at 29–43 (GSYARGDYTEESDID). Asp41 and Asp43 together coordinate Mg(2+).

It belongs to the MntA antitoxin family. The cofactor is Mg(2+).

The enzyme catalyses L-tyrosyl-[protein] + ATP = O-(5'-adenylyl)-L-tyrosyl-[protein] + diphosphate. The catalysed reaction is O-(5'-adenylyl)-L-tyrosyl-[protein] + ATP = O-[5'-(adenylyl-(5'-&gt;3')-adenylyl)]-L-tyrosyl-[protein] + diphosphate. Functionally, putative antitoxin component of a putative type VII toxin-antitoxin (TA) system. Its cognate toxin might be MJ0605, which it might AMPylate. The polypeptide is Putative protein adenylyltransferase MJ0604 (Methanocaldococcus jannaschii (strain ATCC 43067 / DSM 2661 / JAL-1 / JCM 10045 / NBRC 100440) (Methanococcus jannaschii)).